We begin with the raw amino-acid sequence, 177 residues long: Large ribosomal subunit protein uL6 (177 aa).

Belongs to the universal ribosomal protein uL6 family. Part of the 50S ribosomal subunit.

In terms of biological role, this protein binds to the 23S rRNA, and is important in its secondary structure. It is located near the subunit interface in the base of the L7/L12 stalk, and near the tRNA binding site of the peptidyltransferase center. This chain is Large ribosomal subunit protein uL6, found in Aliivibrio fischeri (strain MJ11) (Vibrio fischeri).